We begin with the raw amino-acid sequence, 59 residues long: Large ribosomal subunit protein uL30 (59 aa).

This sequence belongs to the universal ribosomal protein uL30 family. In terms of assembly, part of the 50S ribosomal subunit.

The chain is Large ribosomal subunit protein uL30 from Macrococcus caseolyticus (strain JCSC5402) (Macrococcoides caseolyticum).